We begin with the raw amino-acid sequence, 362 residues long: Biotin synthase (362 aa).

The 229-residue stretch at 39-267 (NVVQVSTLLS…ETQVRLSAGR (229 aa)) folds into the Radical SAM core domain. 3 residues coordinate [4Fe-4S] cluster: cysteine 54, cysteine 58, and cysteine 61. Residues cysteine 98, cysteine 130, cysteine 190, and arginine 262 each contribute to the [2Fe-2S] cluster site. The segment at 317–362 (PFTKVSQPTTVEAKDSRYESLGEKPKWSRPSHTIEKNLELSGKGKN) is disordered. The segment covering 328–354 (EAKDSRYESLGEKPKWSRPSHTIEKNL) has biased composition (basic and acidic residues).

It belongs to the radical SAM superfamily. Biotin synthase family. In terms of assembly, homodimer. [4Fe-4S] cluster is required as a cofactor. Requires [2Fe-2S] cluster as cofactor.

It catalyses the reaction (4R,5S)-dethiobiotin + (sulfur carrier)-SH + 2 reduced [2Fe-2S]-[ferredoxin] + 2 S-adenosyl-L-methionine = (sulfur carrier)-H + biotin + 2 5'-deoxyadenosine + 2 L-methionine + 2 oxidized [2Fe-2S]-[ferredoxin]. It participates in cofactor biosynthesis; biotin biosynthesis; biotin from 7,8-diaminononanoate: step 2/2. Functionally, catalyzes the conversion of dethiobiotin (DTB) to biotin by the insertion of a sulfur atom into dethiobiotin via a radical-based mechanism. This chain is Biotin synthase, found in Flavobacterium psychrophilum (strain ATCC 49511 / DSM 21280 / CIP 103535 / JIP02/86).